Here is a 172-residue protein sequence, read N- to C-terminus: Peptide deformylase (172 aa).

Fe cation-binding residues include C91 and H133. Residue E134 is part of the active site. H137 serves as a coordination point for Fe cation.

The protein belongs to the polypeptide deformylase family. The cofactor is Fe(2+).

It carries out the reaction N-terminal N-formyl-L-methionyl-[peptide] + H2O = N-terminal L-methionyl-[peptide] + formate. Its function is as follows. Removes the formyl group from the N-terminal Met of newly synthesized proteins. Requires at least a dipeptide for an efficient rate of reaction. N-terminal L-methionine is a prerequisite for activity but the enzyme has broad specificity at other positions. The chain is Peptide deformylase from Vibrio campbellii (strain ATCC BAA-1116).